The following is a 657-amino-acid chain: UvrABC system protein B (657 aa).

One can recognise a Helicase ATP-binding domain in the interval 25-182 (NSIKSNNRAQ…KKLIEIQYER (158 aa)). Residue 38–45 (GVTGSGKT) coordinates ATP. Residues 91–114 (YYDYYQPEAYVPQTDTFIEKDASI) carry the Beta-hairpin motif. One can recognise a Helicase C-terminal domain in the interval 429–595 (QIDDLYGEIN…TIIKDVRDII (167 aa)). A UVR domain is found at 621–656 (DKLIKDLTEEMLLAAKNLQFERAAELRDIINEIKDG).

Belongs to the UvrB family. As to quaternary structure, forms a heterotetramer with UvrA during the search for lesions. Interacts with UvrC in an incision complex.

It is found in the cytoplasm. In terms of biological role, the UvrABC repair system catalyzes the recognition and processing of DNA lesions. A damage recognition complex composed of 2 UvrA and 2 UvrB subunits scans DNA for abnormalities. Upon binding of the UvrA(2)B(2) complex to a putative damaged site, the DNA wraps around one UvrB monomer. DNA wrap is dependent on ATP binding by UvrB and probably causes local melting of the DNA helix, facilitating insertion of UvrB beta-hairpin between the DNA strands. Then UvrB probes one DNA strand for the presence of a lesion. If a lesion is found the UvrA subunits dissociate and the UvrB-DNA preincision complex is formed. This complex is subsequently bound by UvrC and the second UvrB is released. If no lesion is found, the DNA wraps around the other UvrB subunit that will check the other stand for damage. This Clostridium beijerinckii (strain ATCC 51743 / NCIMB 8052) (Clostridium acetobutylicum) protein is UvrABC system protein B.